The following is a 721-amino-acid chain: Choline O-acetyltransferase (721 aa).

His419 serves as the catalytic Proton acceptor. CoA-binding positions include 496–508, Ser534, and Gln656; that span reads GKTF…VSPD.

Belongs to the carnitine/choline acetyltransferase family. As to quaternary structure, the 54 kDa and 13 kDa chains exist as a heterodimer. Post-translationally, the N-terminus of choline O-acetyltransferase 67 kDa and 54 kDa chains are blocked.

The enzyme catalyses choline + acetyl-CoA = acetylcholine + CoA. Functionally, catalyzes the reversible synthesis of acetylcholine (ACh) from acetyl CoA and choline at cholinergic synapses. The sequence is that of Choline O-acetyltransferase from Drosophila melanogaster (Fruit fly).